A 68-amino-acid chain; its full sequence is Gene 42 protein (68 aa).

This is Gene 42 protein (42) from Mycobacterium phage D29 (Mycobacteriophage D29).